A 594-amino-acid chain; its full sequence is NADH-ubiquinone oxidoreductase chain 5 (594 aa).

Transmembrane regions (helical) follow at residues 1 to 21, 43 to 63, 87 to 107, 114 to 134, 137 to 157, 171 to 191, 211 to 233, 241 to 261, 272 to 292, 301 to 320, 325 to 347, 366 to 386, 409 to 429, 457 to 477, and 486 to 506; these read MNLF…PIMM, AFLI…EMII, IVFA…SMWY, INQF…LVTA, LFQL…LIGW, AILY…WFLS, LPLM…HPWL, TPVS…FLLI, LMQT…AMCA, IIAF…IGIN, AFLH…GSII, MPFT…VPFL, LLIT…IIFF, LMAG…PMTT, and LKMT…EITL.

This sequence belongs to the complex I subunit 5 family. As to quaternary structure, core subunit of respiratory chain NADH dehydrogenase (Complex I) which is composed of 45 different subunits.

The protein localises to the mitochondrion inner membrane. It catalyses the reaction a ubiquinone + NADH + 5 H(+)(in) = a ubiquinol + NAD(+) + 4 H(+)(out). Its function is as follows. Core subunit of the mitochondrial membrane respiratory chain NADH dehydrogenase (Complex I) which catalyzes electron transfer from NADH through the respiratory chain, using ubiquinone as an electron acceptor. Essential for the catalytic activity and assembly of complex I. The polypeptide is NADH-ubiquinone oxidoreductase chain 5 (MT-ND5) (Hippopotamus amphibius (Hippopotamus)).